We begin with the raw amino-acid sequence, 87 residues long: Small ribosomal subunit protein bS20 (87 aa).

The segment at 1–22 (MANTSQARKRARQAGVRRVRNA) is disordered. The span at 7–20 (ARKRARQAGVRRVR) shows a compositional bias: basic residues.

Belongs to the bacterial ribosomal protein bS20 family.

Functionally, binds directly to 16S ribosomal RNA. This Nitrosococcus oceani (strain ATCC 19707 / BCRC 17464 / JCM 30415 / NCIMB 11848 / C-107) protein is Small ribosomal subunit protein bS20.